Here is a 1285-residue protein sequence, read N- to C-terminus: Peroxisomal ATPase PEX1 (1285 aa).

Over residues 344–353 (QQGKTKQSVM) the composition is skewed to polar residues. Residues 344 to 373 (QQGKTKQSVMSPEKEKHPLESPNHKQIGSD) form a disordered region. Ser354 carries the phosphoserine modification. Over residues 355 to 373 (PEKEKHPLESPNHKQIGSD) the composition is skewed to basic and acidic residues. ATP is bound by residues 601-608 (GGKGSGKS) and 883-890 (GPPGTGKT). Residues 1142-1161 (NGTSSDLSSQCPSAPSSVTQ) show a composition bias toward polar residues. The interval 1142 to 1162 (NGTSSDLSSQCPSAPSSVTQD) is disordered. A phosphoserine mark is found at Ser1183, Ser1211, and Ser1213. Residues 1262–1285 (FQNPKKRKNPSGTVFRPGQKVTLA) form a disordered region.

The protein belongs to the AAA ATPase family. In terms of assembly, homooligomer; homooligomerizes in the cytosol, interaction with PEX6 promotes dissociation of the homooligomer. Interacts with PEX6; forming the PEX1-PEX6 AAA ATPase complex, which is composed of a heterohexamer formed by a trimer of PEX1-PEX6 dimers. Interacts indirectly with PEX26, via its interaction with PEX6.

The protein resides in the cytoplasm. Its subcellular location is the cytosol. It is found in the peroxisome membrane. The enzyme catalyses ATP + H2O = ADP + phosphate + H(+). In terms of biological role, component of the PEX1-PEX6 AAA ATPase complex, a protein dislocase complex that mediates the ATP-dependent extraction of the PEX5 receptor from peroxisomal membranes, an essential step for PEX5 recycling. Specifically recognizes PEX5 monoubiquitinated at 'Cys-11', and pulls it out of the peroxisome lumen through the PEX2-PEX10-PEX12 retrotranslocation channel. Extraction by the PEX1-PEX6 AAA ATPase complex is accompanied by unfolding of the TPR repeats and release of bound cargo from PEX5. The protein is Peroxisomal ATPase PEX1 of Cricetulus griseus (Chinese hamster).